The chain runs to 609 residues: Phosphoenolpyruvate carboxykinase [GTP] (609 aa).

Substrate is bound by residues R81 and 220 to 222 (YGG). 2 residues coordinate Mn(2+): K229 and H249. Position 271 (S271) interacts with substrate. 272-277 (ACGKTN) contacts GTP. The active site involves C273. Residue D296 coordinates Mn(2+). 387-389 (NSR) serves as a coordination point for substrate. GTP contacts are provided by residues R389, R420, and 515–518 (FGEN).

This sequence belongs to the phosphoenolpyruvate carboxykinase [GTP] family. As to quaternary structure, monomer. Mn(2+) is required as a cofactor.

The protein localises to the cytoplasm. The enzyme catalyses oxaloacetate + GTP = phosphoenolpyruvate + GDP + CO2. It participates in carbohydrate biosynthesis; gluconeogenesis. In terms of biological role, catalyzes the conversion of oxaloacetate (OAA) to phosphoenolpyruvate (PEP), the rate-limiting step in the metabolic pathway that produces glucose from lactate and other precursors derived from the citric acid cycle. The chain is Phosphoenolpyruvate carboxykinase [GTP] from Mycobacterium leprae (strain Br4923).